Reading from the N-terminus, the 200-residue chain is Probable nicotinate-nucleotide adenylyltransferase (200 aa).

It belongs to the NadD family.

It carries out the reaction nicotinate beta-D-ribonucleotide + ATP + H(+) = deamido-NAD(+) + diphosphate. It functions in the pathway cofactor biosynthesis; NAD(+) biosynthesis; deamido-NAD(+) from nicotinate D-ribonucleotide: step 1/1. Its function is as follows. Catalyzes the reversible adenylation of nicotinate mononucleotide (NaMN) to nicotinic acid adenine dinucleotide (NaAD). The chain is Probable nicotinate-nucleotide adenylyltransferase from Clostridium botulinum (strain Eklund 17B / Type B).